The primary structure comprises 29 residues: Cyclotide mobo-A (29 aa).

Positions glycine 1–asparagine 29 form a cross-link, cyclopeptide (Gly-Asn). Cystine bridges form between cysteine 5-cysteine 19, cysteine 9-cysteine 21, and cysteine 14-cysteine 26.

This sequence belongs to the cyclotide family. Moebius subfamily. In terms of processing, this is a cyclic peptide.

Functionally, probably participates in a plant defense mechanism. In Melicytus obovatus (Hymenanthera obovata), this protein is Cyclotide mobo-A.